Consider the following 261-residue polypeptide: Small ribosomal subunit protein mS23 (261 aa).

The tract at residues 228 to 261 (EQRAAAFTGAPEIPSTEDSLGLEEGVEEKQPQQA) is disordered.

Belongs to the mitochondrion-specific ribosomal protein mS23 family. As to quaternary structure, component of the mitochondrial small ribosomal subunit.

Its subcellular location is the mitochondrion. The chain is Small ribosomal subunit protein mS23 (rsm25) from Aspergillus oryzae (strain ATCC 42149 / RIB 40) (Yellow koji mold).